We begin with the raw amino-acid sequence, 296 residues long: Zinc finger protein 75A (296 aa).

In terms of domain architecture, KRAB spans 1–66; the sequence is MYFSQEEWEL…VSPEFKDSAG (66 aa). C2H2-type zinc fingers lie at residues 161-183, 189-211, 217-239, 245-267, and 273-295; these read FKCQECGKTFRVSSDLIKHQRIH, YKCQQCDKRFRWSSDLNKHLTTH, YKCSWCGKSFSQNTNLHTHQRTH, FTCHECGKKFSQNSHLIKHRRTH, and YTCSICRRNFSRRSSLLRHQKLH.

The protein belongs to the krueppel C2H2-type zinc-finger protein family.

Its subcellular location is the nucleus. May be involved in transcriptional regulation. The protein is Zinc finger protein 75A (ZNF75A) of Homo sapiens (Human).